A 381-amino-acid chain; its full sequence is Neuropeptide Y receptor type 2 (381 aa).

Residues 1–37 (MGPVGAEADENQTVEVKVEPYGPGHTTPRGELPPDPE) form a disordered region. The Extracellular portion of the chain corresponds to 1–51 (MGPVGAEADENQTVEVKVEPYGPGHTTPRGELPPDPEPELIDSTKLVEVQV). N-linked (GlcNAc...) asparagine glycosylation occurs at asparagine 11. A helical transmembrane segment spans residues 52–72 (ILILAYCSIILLGVVGNSLVI). The Cytoplasmic portion of the chain corresponds to 73–86 (HVVIKFKSMRTVTN). A helical transmembrane segment spans residues 87-107 (FFIANLAVADLLVNTLCLPFT). Topologically, residues 108–124 (LTYTLMGEWKMGPVLCH) are extracellular. An intrachain disulfide couples cysteine 123 to cysteine 203. Residues 125–145 (LVPYAQGLAVQVSTITLTVIA) form a helical membrane-spanning segment. Over 146–165 (LDRHRCIVYHLESKISKRIS) the chain is Cytoplasmic. A helical membrane pass occupies residues 166 to 186 (FLIIGLAWGISALLASPLAIF). Topologically, residues 187 to 216 (REYSLIEIIPDFEIVACTEKWPGEEKSVYG) are extracellular. A helical transmembrane segment spans residues 217 to 237 (TVYSLSTLLILYVLPLGIISF). The Cytoplasmic segment spans residues 238-268 (SYTRIWSKLRNHVSPGAASDHYHQRRHKMTK). A helical transmembrane segment spans residues 269–289 (MLVCVVVVFAVSWLPLHAFQL). Residues 290–304 (AVDIDSHVLDLKEYK) are Extracellular-facing. Residues 305 to 325 (LIFTVFHIIAMCSTFANPLLY) form a helical membrane-spanning segment. At 326 to 381 (GWMNSNYRKAFLSAFRCEQRLDAIHSEVSMTFKAKKNLEVKKNNGPTDSFSEATNV) the chain is on the cytoplasmic side. The S-palmitoyl cysteine moiety is linked to residue cysteine 342.

The protein belongs to the G-protein coupled receptor 1 family.

The protein localises to the cell membrane. In terms of biological role, receptor for neuropeptide Y and peptide YY. The chain is Neuropeptide Y receptor type 2 (Npy2r) from Mus musculus (Mouse).